The primary structure comprises 291 residues: Porphobilinogen deaminase (291 aa).

Cysteine 237 carries the S-(dipyrrolylmethanemethyl)cysteine modification.

It belongs to the HMBS family. In terms of assembly, monomer. Dipyrromethane is required as a cofactor.

The catalysed reaction is 4 porphobilinogen + H2O = hydroxymethylbilane + 4 NH4(+). It participates in porphyrin-containing compound metabolism; protoporphyrin-IX biosynthesis; coproporphyrinogen-III from 5-aminolevulinate: step 2/4. Functionally, tetrapolymerization of the monopyrrole PBG into the hydroxymethylbilane pre-uroporphyrinogen in several discrete steps. The sequence is that of Porphobilinogen deaminase from Clostridium perfringens (strain 13 / Type A).